Consider the following 218-residue polypeptide: Small ribosomal subunit protein uS3 (218 aa).

One can recognise a KH type-2 domain in the interval 38 to 106 (IREYISKRLS…RVHINILEIK (69 aa)).

It belongs to the universal ribosomal protein uS3 family. Part of the 30S ribosomal subunit. Forms a tight complex with proteins S10 and S14.

Its function is as follows. Binds the lower part of the 30S subunit head. Binds mRNA in the 70S ribosome, positioning it for translation. This chain is Small ribosomal subunit protein uS3, found in Bacillus subtilis (strain 168).